A 112-amino-acid chain; its full sequence is MYDHAHSLARALKESQEYKSFQAAREKIKGKPAAEQMIADFHKRQMELQAEVLQGKELTQEQKEGLERLYNVLIQDLDIRDYLMAEQRLGTLLSDVYKIIGEAVDVDLPFTK.

It belongs to the UPF0342 family.

The protein is UPF0342 protein STH1710 of Symbiobacterium thermophilum (strain DSM 24528 / JCM 14929 / IAM 14863 / T).